We begin with the raw amino-acid sequence, 555 residues long: CTP synthase (555 aa).

Residues 1–271 (MVKRGKKTKY…DDKLAELFNI (271 aa)) form an amidoligase domain region. Ser-19 provides a ligand contact to CTP. Ser-19 is a UTP binding site. ATP contacts are provided by residues 20–25 (SLGKGL) and Asp-77. The Mg(2+) site is built by Asp-77 and Glu-145. CTP-binding positions include 152–154 (DIE), 192–197 (KTKPTQ), and Lys-228. UTP-binding positions include 192–197 (KTKPTQ) and Lys-228. The 241-residue stretch at 297 to 537 (RIGIVGKYVE…VKAALEHRDA (241 aa)) folds into the Glutamine amidotransferase type-1 domain. Gly-358 is an L-glutamine binding site. Cys-385 (nucleophile; for glutamine hydrolysis) is an active-site residue. L-glutamine contacts are provided by residues 386–389 (LGLQ), Glu-409, and Arg-466. Residues His-510 and Glu-512 contribute to the active site. Residues 535–555 (RDAQQRQPPAEVKKLAVGKNG) are disordered.

The protein belongs to the CTP synthase family. As to quaternary structure, homotetramer.

The enzyme catalyses UTP + L-glutamine + ATP + H2O = CTP + L-glutamate + ADP + phosphate + 2 H(+). It carries out the reaction L-glutamine + H2O = L-glutamate + NH4(+). It catalyses the reaction UTP + NH4(+) + ATP = CTP + ADP + phosphate + 2 H(+). Its pathway is pyrimidine metabolism; CTP biosynthesis via de novo pathway; CTP from UDP: step 2/2. With respect to regulation, allosterically activated by GTP, when glutamine is the substrate; GTP has no effect on the reaction when ammonia is the substrate. The allosteric effector GTP functions by stabilizing the protein conformation that binds the tetrahedral intermediate(s) formed during glutamine hydrolysis. Inhibited by the product CTP, via allosteric rather than competitive inhibition. Its function is as follows. Catalyzes the ATP-dependent amination of UTP to CTP with either L-glutamine or ammonia as the source of nitrogen. Regulates intracellular CTP levels through interactions with the four ribonucleotide triphosphates. This is CTP synthase from Anaeromyxobacter dehalogenans (strain 2CP-1 / ATCC BAA-258).